A 211-amino-acid polypeptide reads, in one-letter code: Peroxiredoxin (211 aa).

The Thioredoxin domain occupies 2 to 156 (PLLGDDFPEL…ILRAVKVLQI (155 aa)). C44 functions as the Cysteine sulfenic acid (-SOH) intermediate in the catalytic mechanism. R119 contributes to the substrate binding site. A disulfide bridge connects residues C199 and C205.

Belongs to the peroxiredoxin family. Prx6 subfamily. Homodecamer. Pentamer of dimers that assemble into a ring structure.

The protein resides in the cytoplasm. The enzyme catalyses a hydroperoxide + [thioredoxin]-dithiol = an alcohol + [thioredoxin]-disulfide + H2O. Its function is as follows. Thiol-specific peroxidase that catalyzes the reduction of hydrogen peroxide and organic hydroperoxides to water and alcohols, respectively. Plays a role in cell protection against oxidative stress by detoxifying peroxides. This Chlorobaculum tepidum (strain ATCC 49652 / DSM 12025 / NBRC 103806 / TLS) (Chlorobium tepidum) protein is Peroxiredoxin.